Consider the following 200-residue polypeptide: Cytochrome c biogenesis ATP-binding export protein CcmA (200 aa).

The ABC transporter domain occupies 1–200 (MRLSGNGLRC…ARELRIGGAA (200 aa)). 35–42 (GPNGAGKT) is a binding site for ATP.

It belongs to the ABC transporter superfamily. CcmA exporter (TC 3.A.1.107) family. As to quaternary structure, the complex is composed of two ATP-binding proteins (CcmA) and two transmembrane proteins (CcmB).

The protein localises to the cell inner membrane. The catalysed reaction is heme b(in) + ATP + H2O = heme b(out) + ADP + phosphate + H(+). In terms of biological role, part of the ABC transporter complex CcmAB involved in the biogenesis of c-type cytochromes; once thought to export heme, this seems not to be the case, but its exact role is uncertain. Responsible for energy coupling to the transport system. The chain is Cytochrome c biogenesis ATP-binding export protein CcmA from Nitrobacter winogradskyi (strain ATCC 25391 / DSM 10237 / CIP 104748 / NCIMB 11846 / Nb-255).